The sequence spans 298 residues: Quinolinate synthase (298 aa).

Positions 19 and 36 each coordinate iminosuccinate. Cys81 contributes to the [4Fe-4S] cluster binding site. Residues 107–109 (YVN) and Ser124 contribute to the iminosuccinate site. Residue Cys168 participates in [4Fe-4S] cluster binding. Iminosuccinate contacts are provided by residues 193–195 (HPE) and Thr210. Cys254 is a binding site for [4Fe-4S] cluster.

Belongs to the quinolinate synthase family. Type 2 subfamily. The cofactor is [4Fe-4S] cluster.

It localises to the cytoplasm. The enzyme catalyses iminosuccinate + dihydroxyacetone phosphate = quinolinate + phosphate + 2 H2O + H(+). It functions in the pathway cofactor biosynthesis; NAD(+) biosynthesis; quinolinate from iminoaspartate: step 1/1. Its function is as follows. Catalyzes the condensation of iminoaspartate with dihydroxyacetone phosphate to form quinolinate. The chain is Quinolinate synthase from Thermotoga petrophila (strain ATCC BAA-488 / DSM 13995 / JCM 10881 / RKU-1).